Here is a 305-residue protein sequence, read N- to C-terminus: Ribosomal RNA large subunit methyltransferase F (305 aa).

It belongs to the methyltransferase superfamily. METTL16/RlmF family.

It localises to the cytoplasm. It catalyses the reaction adenosine(1618) in 23S rRNA + S-adenosyl-L-methionine = N(6)-methyladenosine(1618) in 23S rRNA + S-adenosyl-L-homocysteine + H(+). In terms of biological role, specifically methylates the adenine in position 1618 of 23S rRNA. The sequence is that of Ribosomal RNA large subunit methyltransferase F from Bacteroides fragilis (strain YCH46).